Here is a 353-residue protein sequence, read N- to C-terminus: Thiamine-phosphate synthase (353 aa).

The segment at 1–128 is unknown; the sequence is MKSMPVAPIA…AASAAAIRYG (128 aa). Residues 129 to 353 are thiamine-phosphate synthase; the sequence is LYDLEVTVLQ…TSLQLLEALR (225 aa). Residues 185–189 and Asn217 each bind 4-amino-2-methyl-5-(diphosphooxymethyl)pyrimidine; that span reads QYRNK. Residues Asp218 and Asp237 each coordinate Mg(2+). Ser256 contacts 4-amino-2-methyl-5-(diphosphooxymethyl)pyrimidine. 282 to 284 is a 2-[(2R,5Z)-2-carboxy-4-methylthiazol-5(2H)-ylidene]ethyl phosphate binding site; the sequence is TAT. Position 285 (Lys285) interacts with 4-amino-2-methyl-5-(diphosphooxymethyl)pyrimidine. Residue Gly312 coordinates 2-[(2R,5Z)-2-carboxy-4-methylthiazol-5(2H)-ylidene]ethyl phosphate.

It belongs to the thiamine-phosphate synthase family. Mg(2+) serves as cofactor.

It carries out the reaction 2-[(2R,5Z)-2-carboxy-4-methylthiazol-5(2H)-ylidene]ethyl phosphate + 4-amino-2-methyl-5-(diphosphooxymethyl)pyrimidine + 2 H(+) = thiamine phosphate + CO2 + diphosphate. The enzyme catalyses 2-(2-carboxy-4-methylthiazol-5-yl)ethyl phosphate + 4-amino-2-methyl-5-(diphosphooxymethyl)pyrimidine + 2 H(+) = thiamine phosphate + CO2 + diphosphate. It catalyses the reaction 4-methyl-5-(2-phosphooxyethyl)-thiazole + 4-amino-2-methyl-5-(diphosphooxymethyl)pyrimidine + H(+) = thiamine phosphate + diphosphate. It participates in cofactor biosynthesis; thiamine diphosphate biosynthesis; thiamine phosphate from 4-amino-2-methyl-5-diphosphomethylpyrimidine and 4-methyl-5-(2-phosphoethyl)-thiazole: step 1/1. Condenses 4-methyl-5-(beta-hydroxyethyl)thiazole monophosphate (THZ-P) and 2-methyl-4-amino-5-hydroxymethyl pyrimidine pyrophosphate (HMP-PP) to form thiamine monophosphate (TMP). The sequence is that of Thiamine-phosphate synthase from Prochlorococcus marinus (strain MIT 9303).